Here is a 371-residue protein sequence, read N- to C-terminus: Cytochrome b (371 aa).

Transmembrane regions (helical) follow at residues 25–45 (FGSM…FLAI), 69–90 (WIMQ…YIHI), 105–125 (WLTG…GYVL), and 170–190 (FFAL…IHII). His-75 and His-89 together coordinate heme b. 2 residues coordinate heme b: His-174 and His-188. His-193 serves as a coordination point for a ubiquinone. A run of 4 helical transmembrane segments spans residues 218–238 (YKDL…LSFM), 280–300 (LGGA…PFTH), 312–332 (LAQT…WAAT), and 339–358 (FLLI…IMNP).

Belongs to the cytochrome b family. The cytochrome bc1 complex contains 3 respiratory subunits (MT-CYB, CYC1 and UQCRFS1), 2 core proteins (UQCRC1 and UQCRC2) and probably 6 low-molecular weight proteins. Heme b is required as a cofactor.

It is found in the mitochondrion inner membrane. Its function is as follows. Component of the ubiquinol-cytochrome c reductase complex (complex III or cytochrome b-c1 complex) that is part of the mitochondrial respiratory chain. The b-c1 complex mediates electron transfer from ubiquinol to cytochrome c. Contributes to the generation of a proton gradient across the mitochondrial membrane that is then used for ATP synthesis. The chain is Cytochrome b (MT-CYB) from Laticauda colubrina (Yellow-lipped sea krait).